The sequence spans 416 residues: Enolase (416 aa).

Glutamine 160 is a binding site for (2R)-2-phosphoglycerate. Glutamate 204 functions as the Proton donor in the catalytic mechanism. Residues aspartate 239, glutamate 282, and aspartate 308 each contribute to the Mg(2+) site. Lysine 333, arginine 362, serine 363, and lysine 384 together coordinate (2R)-2-phosphoglycerate. Lysine 333 acts as the Proton acceptor in catalysis.

Belongs to the enolase family. The cofactor is Mg(2+).

It localises to the cytoplasm. Its subcellular location is the secreted. The protein localises to the cell surface. It catalyses the reaction (2R)-2-phosphoglycerate = phosphoenolpyruvate + H2O. Its pathway is carbohydrate degradation; glycolysis; pyruvate from D-glyceraldehyde 3-phosphate: step 4/5. Catalyzes the reversible conversion of 2-phosphoglycerate (2-PG) into phosphoenolpyruvate (PEP). It is essential for the degradation of carbohydrates via glycolysis. This Metallosphaera sedula (strain ATCC 51363 / DSM 5348 / JCM 9185 / NBRC 15509 / TH2) protein is Enolase.